We begin with the raw amino-acid sequence, 422 residues long: p-hydroxyphenylacetate 3-hydroxylase, oxygenase component (422 aa).

Residue tryptophan 112 coordinates FMN. 2 residues coordinate substrate: histidine 120 and serine 146. FMN contacts are provided by residues 146–148 (SSI) and 169–171 (WSS). Residue 263 to 266 (RPYF) coordinates substrate. FMN is bound by residues arginine 292, tyrosine 296, 374–375 (AT), and 396–397 (HA). Tyrosine 296 contributes to the substrate binding site.

The protein belongs to the HpaH/HsaA monooxygenase family. As to quaternary structure, homotetramer. The p-hydroxyphenylacetate 3-hydroxylase (HpaH) is composed of an oxygenase component C2 and a reductase component C1.

It carries out the reaction 4-hydroxyphenylacetate + FMNH2 + O2 = 3,4-dihydroxyphenylacetate + FMN + H2O + H(+). The catalysed reaction is 4-hydroxyphenylacetate + FADH2 + O2 = 3,4-dihydroxyphenylacetate + FAD + H2O + H(+). Its pathway is aromatic compound metabolism; 4-hydroxyphenylacetate degradation; pyruvate and succinate semialdehyde from 4-hydroxyphenylacetate: step 1/7. Its activity is regulated as follows. Inhibited by flavin concentrations greater than 15 uM. Also inhibited by excess p-hydroxyphenylacetate (HPA). Oxygenase component of a two-component system that utilizes reduced FMN (FMNH2) supplied by the reductase component to catalyze the hydroxylation of 4-hydroxyphenylacetic acid, leading to the production of 3,4-dihydroxyphenylacetate (3,4-DHPA). Also utilizes other reduced flavins such as FADH2 and reduced riboflavin to a lesser extent. Only the compounds with a hydroxyl group in the para (p-) position can be hydroxylated. May also oxidize phenol to catechol, and hydroxylate other phenol derivatives. The protein is p-hydroxyphenylacetate 3-hydroxylase, oxygenase component of Acinetobacter baumannii.